The sequence spans 83 residues: Large ribosomal subunit protein bL27 (83 aa).

The protein belongs to the bacterial ribosomal protein bL27 family.

This is Large ribosomal subunit protein bL27 (rpmA) from Thermotoga maritima (strain ATCC 43589 / DSM 3109 / JCM 10099 / NBRC 100826 / MSB8).